A 95-amino-acid polypeptide reads, in one-letter code: Small ribosomal subunit protein bS6 (95 aa).

It belongs to the bacterial ribosomal protein bS6 family.

Binds together with bS18 to 16S ribosomal RNA. This Desulfitobacterium hafniense (strain DSM 10664 / DCB-2) protein is Small ribosomal subunit protein bS6.